The following is an 84-amino-acid chain: Putative membrane protein insertion efficiency factor (84 aa).

The protein belongs to the UPF0161 family.

Its subcellular location is the cell inner membrane. Its function is as follows. Could be involved in insertion of integral membrane proteins into the membrane. The protein is Putative membrane protein insertion efficiency factor of Nostoc sp. (strain PCC 7120 / SAG 25.82 / UTEX 2576).